Here is a 299-residue protein sequence, read N- to C-terminus: Probable arylamine N-acetyltransferase 2 (299 aa).

The active-site Acyl-thioester intermediate is the C75. Residues H115 and D130 contribute to the active site.

Belongs to the arylamine N-acetyltransferase family.

The catalysed reaction is an arylamine + acetyl-CoA = an N-acetylarylamine + CoA. The protein is Probable arylamine N-acetyltransferase 2 of Dictyostelium discoideum (Social amoeba).